A 439-amino-acid polypeptide reads, in one-letter code: Trigger factor (439 aa).

Positions 175–260 (SDKLVIDYQN…VKSVYVMKGM (86 aa)) constitute a PPIase FKBP-type domain.

Belongs to the FKBP-type PPIase family. Tig subfamily.

Its subcellular location is the cytoplasm. It catalyses the reaction [protein]-peptidylproline (omega=180) = [protein]-peptidylproline (omega=0). Its function is as follows. Involved in protein export. Acts as a chaperone by maintaining the newly synthesized protein in an open conformation. Functions as a peptidyl-prolyl cis-trans isomerase. This chain is Trigger factor, found in Ehrlichia chaffeensis (strain ATCC CRL-10679 / Arkansas).